The following is a 56-amino-acid chain: Small ribosomal subunit protein uS14B (56 aa).

Residues Cys21 and Cys24 each coordinate Zn(2+). The residue at position 25 (Ser25) is a Phosphoserine. Zn(2+)-binding residues include Cys39 and Cys42.

This sequence belongs to the universal ribosomal protein uS14 family. Component of the small ribosomal subunit (SSU). Mature yeast ribosomes consist of a small (40S) and a large (60S) subunit. The 40S small subunit contains 1 molecule of ribosomal RNA (18S rRNA) and 33 different proteins (encoded by 57 genes). The large 60S subunit contains 3 rRNA molecules (25S, 5.8S and 5S rRNA) and 46 different proteins (encoded by 81 genes). The cofactor is Zn(2+).

The protein resides in the cytoplasm. Functionally, component of the ribosome, a large ribonucleoprotein complex responsible for the synthesis of proteins in the cell. The small ribosomal subunit (SSU) binds messenger RNAs (mRNAs) and translates the encoded message by selecting cognate aminoacyl-transfer RNA (tRNA) molecules. The large subunit (LSU) contains the ribosomal catalytic site termed the peptidyl transferase center (PTC), which catalyzes the formation of peptide bonds, thereby polymerizing the amino acids delivered by tRNAs into a polypeptide chain. The nascent polypeptides leave the ribosome through a tunnel in the LSU and interact with protein factors that function in enzymatic processing, targeting, and the membrane insertion of nascent chains at the exit of the ribosomal tunnel. The polypeptide is Small ribosomal subunit protein uS14B (Saccharomyces cerevisiae (strain ATCC 204508 / S288c) (Baker's yeast)).